Consider the following 331-residue polypeptide: Carbonic anhydrase-related protein 11 (331 aa).

The N-terminal stretch at 1–23 (MGGAARLSAPRALVLWAVLGAAA) is a signal peptide. An Alpha-carbonic anhydrase domain is found at 33–306 (DWWSYKDNLQ…LAHRALRGNR (274 aa)). N-linked (GlcNAc...) asparagine glycans are attached at residues N118, N170, N189, and N263. The interval 303 to 331 (RGNRDPRHPERRCRGPNYRLHVDGAPHGR) is disordered. A compositionally biased stretch (basic and acidic residues) spans 322 to 331 (LHVDGAPHGR).

The protein belongs to the alpha-carbonic anhydrase family.

The protein resides in the secreted. In terms of biological role, does not have a catalytic activity. The chain is Carbonic anhydrase-related protein 11 (CA11) from Sus scrofa (Pig).